The following is a 285-amino-acid chain: 3',5'-nucleoside bisphosphate phosphatase (285 aa).

6 residues coordinate Mn(2+): H7, H9, D14, H39, E64, and H75. The substrate site is built by D14 and H39. Substrate-binding positions include 99–102 (RLER) and 134–135 (RT). Residues H191, D248, and H250 each coordinate Mn(2+). H250 is a substrate binding site.

The protein belongs to the PHP family. As to quaternary structure, monomer. Requires Mn(2+) as cofactor.

It catalyses the reaction a ribonucleoside 3',5'-bisphosphate + H2O = a ribonucleoside 5'-phosphate + phosphate. Its function is as follows. Hydrolyzes 3',5'-bisphosphonucleosides (pGp, pCp, pUp, and pIp) to nucleoside 5'-phosphate and orthophosphate. Has similar catalytic efficiencies with all the bases. Also shows activity with ribonucleoside 2'-deoxyribonucleoside 3',5'-bisphosphates. Does not show activity with nucleoside 2',5'-bisphosphates. The chain is 3',5'-nucleoside bisphosphate phosphatase from Chromobacterium violaceum (strain ATCC 12472 / DSM 30191 / JCM 1249 / CCUG 213 / NBRC 12614 / NCIMB 9131 / NCTC 9757 / MK).